The following is a 127-amino-acid chain: Fluoride-specific ion channel FluC (127 aa).

Transmembrane regions (helical) follow at residues 4-24 (SLLA…GLGM), 35-55 (PGTL…IAFF), 68-88 (LLIT…AEVV), and 96-116 (ILWA…MTAA). Na(+) contacts are provided by Gly-75 and Thr-78.

This sequence belongs to the fluoride channel Fluc/FEX (TC 1.A.43) family.

The protein localises to the cell inner membrane. It catalyses the reaction fluoride(in) = fluoride(out). With respect to regulation, na(+) is not transported, but it plays an essential structural role and its presence is essential for fluoride channel function. Fluoride-specific ion channel. Important for reducing fluoride concentration in the cell, thus reducing its toxicity. This Pseudomonas putida (strain W619) protein is Fluoride-specific ion channel FluC.